The sequence spans 517 residues: MTKNIHDQRILILDFGSQYTQLVARRVREIGVYCELWSWDVEEADIREFNPDGIILSGGPESVTEDNSPRAPQYVFDSGVPVLGVCYGMQTMAEQLGGKVSTSDEREFGYAAVKVSGESAIFKDLEATQDVWMSHGDKVVEIPAGFTKVGETDTCPYAAMANEEKKYYGVQFHPEVTHTKNGLQMLENFVLGVCGCERLWTSESIIEDAVARIKEQVGDDEVILGLSGGVDSSVVAMLVHRAIGDKLTCVFVDNGLLRLNEGQQVMDMFGDKFGLNIIKVDAEERFLKALEGKSDPEEKRKTIGHVFVDVFDEESKKLKNAKWLAQGTIYPDVIESAASKTGKAHVIKSHHNVGGLPDDMEMGLVEPLRELFKDEVRKIGLELGLPYEMLYRHPFPGPGLGVRVLGEIKKEYCDLLRRADAIFIEELHAADLYNKVSQAFTVFLPVRSVGVMGDGRKYDWVVSLRAVETIDFMTAHWAHLPYDFLGKVSNRIINEVNGISRVVYDISGKPPATIEWE.

Residues 9 to 199 form the Glutamine amidotransferase type-1 domain; that stretch reads RILILDFGSQ…VLGVCGCERL (191 aa). C86 (nucleophile) is an active-site residue. Catalysis depends on residues H173 and E175. The GMPS ATP-PPase domain maps to 200–392; sequence WTSESIIEDA…LGLPYEMLYR (193 aa). 227–233 contributes to the ATP binding site; the sequence is SGGVDSS.

Homodimer.

It carries out the reaction XMP + L-glutamine + ATP + H2O = GMP + L-glutamate + AMP + diphosphate + 2 H(+). It functions in the pathway purine metabolism; GMP biosynthesis; GMP from XMP (L-Gln route): step 1/1. Functionally, catalyzes the synthesis of GMP from XMP. This chain is GMP synthase [glutamine-hydrolyzing], found in Vibrio vulnificus (strain YJ016).